The sequence spans 160 residues: Crossover junction endodeoxyribonuclease RuvC (160 aa).

Active-site residues include aspartate 7, glutamate 70, and aspartate 142. Mg(2+)-binding residues include aspartate 7, glutamate 70, and aspartate 142.

The protein belongs to the RuvC family. In terms of assembly, homodimer which binds Holliday junction (HJ) DNA. The HJ becomes 2-fold symmetrical on binding to RuvC with unstacked arms; it has a different conformation from HJ DNA in complex with RuvA. In the full resolvosome a probable DNA-RuvA(4)-RuvB(12)-RuvC(2) complex forms which resolves the HJ. Mg(2+) is required as a cofactor.

The protein resides in the cytoplasm. It catalyses the reaction Endonucleolytic cleavage at a junction such as a reciprocal single-stranded crossover between two homologous DNA duplexes (Holliday junction).. The RuvA-RuvB-RuvC complex processes Holliday junction (HJ) DNA during genetic recombination and DNA repair. Endonuclease that resolves HJ intermediates. Cleaves cruciform DNA by making single-stranded nicks across the HJ at symmetrical positions within the homologous arms, yielding a 5'-phosphate and a 3'-hydroxyl group; requires a central core of homology in the junction. The consensus cleavage sequence is 5'-(A/T)TT(C/G)-3'. Cleavage occurs on the 3'-side of the TT dinucleotide at the point of strand exchange. HJ branch migration catalyzed by RuvA-RuvB allows RuvC to scan DNA until it finds its consensus sequence, where it cleaves and resolves the cruciform DNA. The polypeptide is Crossover junction endodeoxyribonuclease RuvC (Ehrlichia ruminantium (strain Welgevonden)).